The following is a 637-amino-acid chain: GTPase-activating protein GYP1 (637 aa).

Basic and acidic residues predominate over residues 1 to 17 (MGVRSAAKEMHERDHNS). Disordered regions lie at residues 1–152 (MGVR…GDRY) and 187–233 (RTLS…NDSK). Residues 18–27 (DSSSLVTSLM) are compositionally biased toward polar residues. Over residues 28 to 45 (KSWRISSASSSKKPSLYK) the composition is skewed to low complexity. Polar residues predominate over residues 46-59 (MNTTESTSLPSGYA). Position 69 is a phosphoserine (Ser69). Polar residues-rich tracts occupy residues 79 to 91 (QQAS…NSYS) and 98 to 107 (PTLSTASNES). Over residues 115 to 127 (RQHHQRHHHHQQP) the composition is skewed to basic residues. Low complexity-rich tracts occupy residues 128–142 (RHSS…CSNS) and 187–207 (RTLS…MGTS). A compositionally biased stretch (polar residues) spans 208–223 (AVRNSSSSFTYPQLPQ). Ser250 is modified (phosphoserine). Residues 280–508 (GIPKIHRPVV…RMWDTYLSET (229 aa)) enclose the Rab-GAP TBC domain. The interval 543–564 (DFQSPTTALSNMTPNNAVEDSG) is disordered.

The protein resides in the golgi apparatus. The protein localises to the golgi stack. Functionally, GTPase-activating protein (GAP) that stimulates specifically the intrinsic GTPase activity of Ypt/Rab-type GTPases YPT1 and YPT7. Functions on the Golgi as a negative regulator of YPT1. Functions on the vacuole as a negative regulator of YPT7. It is also active on SEC4 and YPT51. Provides a catalytic arginine (arginine finger) and glutamine (glutamine finger) in trans to accelerate the GTP hydrolysis rate of the substrate GTPase. This Saccharomyces cerevisiae (strain ATCC 204508 / S288c) (Baker's yeast) protein is GTPase-activating protein GYP1 (GYP1).